The primary structure comprises 183 residues: Microfibrillar-associated protein 2 (183 aa).

A signal peptide (or 18) is located at residues 1–16 (MRAACLFLLFMPGLLA). Gln-17 is modified (pyrrolidone carboxylic acid). 3 positions are modified to sulfotyrosine: Tyr-46, Tyr-47, and Tyr-49. The interval 52-92 (VSPRTPEEQFQSQQQVQQEVIPAPTPEPAAAGDLETEPTEP) is disordered. Positions 59–70 (EQFQSQQQVQQE) are enriched in low complexity. The ShKT domain occupies 153-183 (CRDKFSKCGVMAVSGLCQSVAASCARSCGGC). Cystine bridges form between Cys-153–Cys-183, Cys-160–Cys-176, and Cys-169–Cys-180.

The protein belongs to the MFAP family. In terms of assembly, forms a ternary complex with BGN and ELN. Interacts with FBN1 (via N-terminal domain) and FBN2. Forms intermolecular disulfide bonds either with other MAGP-1 molecules or with other components of the microfibrils. May form transglutaminase cross-links. Post-translationally, O-glycosylated.

It is found in the secreted. It localises to the extracellular space. The protein resides in the extracellular matrix. Functionally, component of the elastin-associated microfibrils. The chain is Microfibrillar-associated protein 2 (Mfap2) from Mus musculus (Mouse).